Here is a 211-residue protein sequence, read N- to C-terminus: Dihydrofolate reductase (211 aa).

A DHFR domain is found at 7–210; that stretch reads PIVGIVACLQ…YCFEFTLYNR (204 aa). NADP(+) contacts are provided by residues alanine 13 and 20–26; that span reads GIGFRGG. 34–39 serves as a coordination point for substrate; that stretch reads EMKYFR. 58 to 60 contributes to the NADP(+) binding site; it reads RKT. A substrate-binding site is contributed by arginine 74. Residues 80–82 and 123–130 contribute to the NADP(+) site; these read SRS and GGGEVYSQ.

The protein belongs to the dihydrofolate reductase family.

The catalysed reaction is (6S)-5,6,7,8-tetrahydrofolate + NADP(+) = 7,8-dihydrofolate + NADPH + H(+). It functions in the pathway cofactor biosynthesis; tetrahydrofolate biosynthesis; 5,6,7,8-tetrahydrofolate from 7,8-dihydrofolate: step 1/1. Functionally, key enzyme in folate metabolism. Catalyzes an essential reaction for de novo glycine and purine synthesis, and for DNA precursor synthesis. This Saccharomyces cerevisiae (strain ATCC 204508 / S288c) (Baker's yeast) protein is Dihydrofolate reductase (DFR1).